Reading from the N-terminus, the 791-residue chain is MDIDVNQMEEKWIRYWDEKDVYRFEPADRDKVFAIDTPPPTVSGKMHMGHSFSYPHIDFIARYKRMRGYHVFFPWGFDDNGLPTERYVEKETGIKPSDSNVEEFIRLCKEISESSEKSLLEGWKRIGMSCYFKDYYVTSSPESIRISQSMFLDLVRKGRVYRDLAPSIRCPTCKTSISQIEMKDQEMHTKLVYINFSVGDRPLTIATTRPEMLGSCVAVFVNPDDARYRDLIGKEATVPIFGNHVRIMADASVDMNFGTGAEMVCTFGDQNDLDLWKKYNLPLKISIDKDGRMTEEAGPLKGLSISDARKKIVEILREGGHVVKEESIKHSVNTHERCGTPIEIFIEKQWFIKYLDLKDAFIENGRKIEWTPEYMRVRYENWVNGLKWDWLISRQRYYGVPFPVWYCADCGNTVYADESELPVDPRIQKPSKKCDRCGSTNLVPERDVMDTWATSSLTPRIALTHFGLFDKYYPEDLRGQGHDIISFWAFTTIARSKIHDDRIPWFRIMISGNVYDMYGEKMSKSKGNIVDIYSMIDKYGADALRFWASTVSQGDDIRIKDQDFTRGRRTVIKMYNAKKLIDILKGDRKIRLFEDVKHPVNRWILTEDSRIMETITTHMDNYEVSKARTALDTFFWNVFCDNYLEMIKPIIQKASAAGDYDTVDETVYTASKVMLDVAKAYAPIMPFIAEEIYQTIDFPGRKISIHVDSWPDEKRRYSDANEEVSYIVSVIDAIRSAKSAAKVSVGTRVKVASVKGRKDLIEKYRDLLSGMLRIDSMEIADGDAVDATVFP.

Positions 40–50 (PTVSGKMHMGH) match the 'HIGH' region motif. Positions 521–525 (KMSKS) match the 'KMSKS' region motif. Residue K524 participates in ATP binding.

It belongs to the class-I aminoacyl-tRNA synthetase family. ValS type 2 subfamily.

The protein localises to the cytoplasm. The enzyme catalyses tRNA(Val) + L-valine + ATP = L-valyl-tRNA(Val) + AMP + diphosphate. In terms of biological role, catalyzes the attachment of valine to tRNA(Val). As ValRS can inadvertently accommodate and process structurally similar amino acids such as threonine, to avoid such errors, it has a 'posttransfer' editing activity that hydrolyzes mischarged Thr-tRNA(Val) in a tRNA-dependent manner. This Thermoplasma acidophilum (strain ATCC 25905 / DSM 1728 / JCM 9062 / NBRC 15155 / AMRC-C165) protein is Valine--tRNA ligase.